The following is a 123-amino-acid chain: S-adenosylmethionine decarboxylase proenzyme 2 (123 aa).

Ser-65 (schiff-base intermediate with substrate; via pyruvic acid) is an active-site residue. Ser-65 is modified (pyruvic acid (Ser); by autocatalysis). Residue His-70 is the Proton acceptor; for processing activity of the active site. The active-site Proton donor; for catalytic activity is the Cys-85.

The protein belongs to the prokaryotic AdoMetDC family. Type 1 subfamily. As to quaternary structure, heterotetramer of two alpha and two beta chains arranged as a dimer of alpha/beta heterodimers. The cofactor is pyruvate. Post-translationally, is synthesized initially as an inactive proenzyme. Formation of the active enzyme involves a self-maturation process in which the active site pyruvoyl group is generated from an internal serine residue via an autocatalytic post-translational modification. Two non-identical subunits are generated from the proenzyme in this reaction, and the pyruvate is formed at the N-terminus of the alpha chain, which is derived from the carboxyl end of the proenzyme. The post-translation cleavage follows an unusual pathway, termed non-hydrolytic serinolysis, in which the side chain hydroxyl group of the serine supplies its oxygen atom to form the C-terminus of the beta chain, while the remainder of the serine residue undergoes an oxidative deamination to produce ammonia and the pyruvoyl group blocking the N-terminus of the alpha chain.

It carries out the reaction S-adenosyl-L-methionine + H(+) = S-adenosyl 3-(methylsulfanyl)propylamine + CO2. The protein operates within amine and polyamine biosynthesis; S-adenosylmethioninamine biosynthesis; S-adenosylmethioninamine from S-adenosyl-L-methionine: step 1/1. Functionally, catalyzes the decarboxylation of S-adenosylmethionine to S-adenosylmethioninamine (dcAdoMet), the propylamine donor required for the synthesis of the polyamines spermine and spermidine from the diamine putrescine. This Bacillus cereus (strain ZK / E33L) protein is S-adenosylmethionine decarboxylase proenzyme 2.